The sequence spans 450 residues: Glucose-6-phosphate isomerase (450 aa).

Residue glutamate 290 is the Proton donor of the active site. Residues histidine 311 and lysine 425 contribute to the active site.

Belongs to the GPI family.

It is found in the cytoplasm. It carries out the reaction alpha-D-glucose 6-phosphate = beta-D-fructose 6-phosphate. Its pathway is carbohydrate biosynthesis; gluconeogenesis. It participates in carbohydrate degradation; glycolysis; D-glyceraldehyde 3-phosphate and glycerone phosphate from D-glucose: step 2/4. Catalyzes the reversible isomerization of glucose-6-phosphate to fructose-6-phosphate. In Lactiplantibacillus plantarum (strain ATCC BAA-793 / NCIMB 8826 / WCFS1) (Lactobacillus plantarum), this protein is Glucose-6-phosphate isomerase.